The following is a 63-amino-acid chain: Cytochrome c oxidase subunit 5C (63 aa).

The helical transmembrane segment at Val-16–Trp-34 threads the bilayer.

The protein belongs to the cytochrome c oxidase subunit 5C family.

It is found in the mitochondrion inner membrane. Functionally, this protein is one of the nuclear-coded polypeptide chains of cytochrome c oxidase, the terminal oxidase in mitochondrial electron transport. This is Cytochrome c oxidase subunit 5C (COX5C) from Oryza sativa subsp. japonica (Rice).